Consider the following 212-residue polypeptide: Leucyl/phenylalanyl-tRNA--protein transferase (212 aa).

The protein belongs to the L/F-transferase family.

It is found in the cytoplasm. The enzyme catalyses N-terminal L-lysyl-[protein] + L-leucyl-tRNA(Leu) = N-terminal L-leucyl-L-lysyl-[protein] + tRNA(Leu) + H(+). The catalysed reaction is N-terminal L-arginyl-[protein] + L-leucyl-tRNA(Leu) = N-terminal L-leucyl-L-arginyl-[protein] + tRNA(Leu) + H(+). It carries out the reaction L-phenylalanyl-tRNA(Phe) + an N-terminal L-alpha-aminoacyl-[protein] = an N-terminal L-phenylalanyl-L-alpha-aminoacyl-[protein] + tRNA(Phe). Functionally, functions in the N-end rule pathway of protein degradation where it conjugates Leu, Phe and, less efficiently, Met from aminoacyl-tRNAs to the N-termini of proteins containing an N-terminal arginine or lysine. This Christiangramia forsetii (strain DSM 17595 / CGMCC 1.15422 / KT0803) (Gramella forsetii) protein is Leucyl/phenylalanyl-tRNA--protein transferase.